Reading from the N-terminus, the 348-residue chain is Cuticle collagen rol-6 (348 aa).

A disordered region spans residues 76 to 348; sequence GYGATGVQPP…SARRHRKFQL (273 aa). The segment covering 120–137 has biased composition (gly residues); it reads PGGGFPDGPFPNGGGPRG. 4 triple-helical region regions span residues 152-178, 196-258, 261-284, and 288-323; these read GPAG…DGKD, GPLG…DGER, GRPG…TGRD, and GQSG…PGKD. The segment covering 194-231 has biased composition (low complexity); that stretch reads PQGPLGPQGPNGAPGLRGMRGARGQPGRPGRDGNPGMP. Over residues 297–306 the composition is skewed to gly residues; it reads GLQGYGGAAG. The span at 322–338 shows a compositional bias: basic and acidic residues; the sequence is KDAEYCKCPGREGDAGR. The segment covering 339-348 has biased composition (basic residues); it reads SARRHRKFQL.

Belongs to the cuticular collagen family. In terms of assembly, collagen polypeptide chains are complexed within the cuticle by disulfide bonds and other types of covalent cross-links. In terms of tissue distribution, localizes in stripes along the alae.

In terms of biological role, nematode cuticles are composed largely of collagen-like proteins. The cuticle functions both as an exoskeleton and as a barrier to protect the worm from its environment. May play a role in cuticle remodeling in response to the environment. Involved in body morphogenesis. This is Cuticle collagen rol-6 (rol-6) from Caenorhabditis elegans.